Reading from the N-terminus, the 339-residue chain is Ketol-acid reductoisomerase (NADP(+)) (339 aa).

One can recognise a KARI N-terminal Rossmann domain in the interval 1 to 182 (MKVYYDADCD…GGGRSGIIET (182 aa)). NADP(+) is bound by residues 24 to 27 (YGSQ), Arg-48, Ser-51, Ser-53, and 83 to 86 (DEHQ). His-108 is an active-site residue. NADP(+) is bound at residue Gly-134. A KARI C-terminal knotted domain is found at 183-328 (NFREECETDL…AKLRAMMPWI (146 aa)). Mg(2+)-binding residues include Asp-191, Glu-195, Glu-227, and Glu-231. A substrate-binding site is contributed by Ser-252.

It belongs to the ketol-acid reductoisomerase family. It depends on Mg(2+) as a cofactor.

The enzyme catalyses (2R)-2,3-dihydroxy-3-methylbutanoate + NADP(+) = (2S)-2-acetolactate + NADPH + H(+). It carries out the reaction (2R,3R)-2,3-dihydroxy-3-methylpentanoate + NADP(+) = (S)-2-ethyl-2-hydroxy-3-oxobutanoate + NADPH + H(+). It functions in the pathway amino-acid biosynthesis; L-isoleucine biosynthesis; L-isoleucine from 2-oxobutanoate: step 2/4. The protein operates within amino-acid biosynthesis; L-valine biosynthesis; L-valine from pyruvate: step 2/4. In terms of biological role, involved in the biosynthesis of branched-chain amino acids (BCAA). Catalyzes an alkyl-migration followed by a ketol-acid reduction of (S)-2-acetolactate (S2AL) to yield (R)-2,3-dihydroxy-isovalerate. In the isomerase reaction, S2AL is rearranged via a Mg-dependent methyl migration to produce 3-hydroxy-3-methyl-2-ketobutyrate (HMKB). In the reductase reaction, this 2-ketoacid undergoes a metal-dependent reduction by NADPH to yield (R)-2,3-dihydroxy-isovalerate. This chain is Ketol-acid reductoisomerase (NADP(+)), found in Novosphingobium aromaticivorans (strain ATCC 700278 / DSM 12444 / CCUG 56034 / CIP 105152 / NBRC 16084 / F199).